The chain runs to 180 residues: Negative modulator of initiation of replication (180 aa).

Interaction with DNA stretches follow at residues 86–87 (AV), 115–119 (RTRVY), and 149–155 (NTNTGRK).

This sequence belongs to the SeqA family. In terms of assembly, homodimer. Polymerizes to form helical filaments.

It is found in the cytoplasm. Functionally, negative regulator of replication initiation, which contributes to regulation of DNA replication and ensures that replication initiation occurs exactly once per chromosome per cell cycle. Binds to pairs of hemimethylated GATC sequences in the oriC region, thus preventing assembly of replication proteins and re-initiation at newly replicated origins. Repression is relieved when the region becomes fully methylated. This Salmonella typhimurium (strain LT2 / SGSC1412 / ATCC 700720) protein is Negative modulator of initiation of replication.